Here is a 160-residue protein sequence, read N- to C-terminus: Large ribosomal subunit protein uL11 (160 aa).

Belongs to the universal ribosomal protein uL11 family. In terms of assembly, part of the ribosomal stalk of the 50S ribosomal subunit. Interacts with L10 and the large rRNA to form the base of the stalk. L10 forms an elongated spine to which L12 dimers bind in a sequential fashion forming a multimeric L10(L12)X complex.

Forms part of the ribosomal stalk which helps the ribosome interact with GTP-bound translation factors. The protein is Large ribosomal subunit protein uL11 of Methanococcus aeolicus (strain ATCC BAA-1280 / DSM 17508 / OCM 812 / Nankai-3).